The chain runs to 753 residues: MMEERAAAAVAAAASSCRPLGSGAGPGPTGAAPVSAPAPGPGPAGKGGGGGGSPGPTAGPEPLSLPGILHFIQHEWARFEAEKARWEAERAELQAQVAFLQGERKGQENLKTDLVRRIKMLEYALKQERAKYHKLKFGTDLNQGEKKADVSEQVSNGPVESVTLENSPLVWKEGRQLLRQYLEEVGYTDTILDMRSKRVRSLLGRSLELNGAVEPSEGAPRAPPGPAGLSGGESLLVKQIEEQIKRNAAGKDGKERLGGSVLGQIPFLQNCEDEDSDEDDELDSVQHKKQRVKLPSKALVPEMEDEDEEDDSEDAINEFDFLGSGEDGEGAPDPRRCTVDGSPHELESRRVKLQGILADLRDVDGLPPKVTGPPPGTPQPRPHEDVFIMDTIGGGEVSLGDLADLTVTNDNDLSCDLSDSKDAFKKTWNPKFTLRSHYDGIRSLAFHHSQSALLTASEDGTLKLWNLQKAVTAKKNAALDVEPIHAFRAHRGPVLAVAMGSNSEYCYSGGADACIHSWKIPDLSMDPYDGYDPSVLSHVLEGHGDAVWGLAFSPTSQRLASCSADGTVRIWDPSSSSPACLCTFPTASEHGVPTSVAFTSTEPAHIVASFRSGDTVLYDMEVGSALLTLESRGSSGPTQINQVVSHPNQPLTITAHDDRGIRFLDNRTGKPVHSMVAHLDAVTCLAVDPNGAFLMSGSHDCSLRLWSLDNKTCVQEITAHRKKHEEAIHAVACHPSKALIASAGADALAKVFV.

Positions 10–65 (VAAAASSCRPLGSGAGPGPTGAAPVSAPAPGPGPAGKGGGGGGSPGPTAGPEPLSL) are disordered. Residues 43–54 (PAGKGGGGGGSP) are compositionally biased toward gly residues. Phosphoserine is present on serine 53. Residues 69 to 136 (LHFIQHEWAR…QERAKYHKLK (68 aa)) are a coiled coil. The tract at residues 71 to 79 (FIQHEWARF) is caveolin-binding. The tract at residues 165–182 (ENSPLVWKEGRQLLRQYL) is calmodulin-binding. Serine 206 bears the Phosphoserine mark. Disordered regions lie at residues 213 to 232 (VEPSEGAPRAPPGPAGLSGG), 271 to 345 (CEDE…SPHE), and 363 to 382 (VDGLPPKVTGPPPGTPQPRP). Composition is skewed to acidic residues over residues 271–283 (CEDEDSDEDDELD) and 302–317 (EMEDEDEEDDSEDAIN). Serine 276 is modified (phosphoserine). Basic and acidic residues predominate over residues 332–345 (PDPRRCTVDGSPHE). Over residues 370 to 380 (VTGPPPGTPQP) the composition is skewed to pro residues. WD repeat units lie at residues 436–475 (SHYDGIRSLAFHHSQSALLTASEDGTLKLWNLQKAVTAKK), 489–528 (AHRGPVLAVAMGSNSEYCYSGGADACIHSWKIPDLSMDPY), 542–581 (GHGDAVWGLAFSPTSQRLASCSADGTVRIWDPSSSSPACL), 587–628 (ASEH…ALLT), 635–674 (SGPTQINQVVSHPNQPLTITAHDDRGIRFLDNRTGKPVHS), 677–716 (AHLDAVTCLAVDPNGAFLMSGSHDCSLRLWSLDNKTCVQE), and 723–753 (KHEEAIHAVACHPSKALIASAGADALAKVFV).

The protein belongs to the WD repeat striatin family. In terms of assembly, part of the core of STRIPAK complexes composed of PP2A catalytic and scaffolding subunits, the striatins (PP2A regulatory subunits), the striatin-associated proteins MOB4, STRIP1 and STRIP2, PDCD10 and members of the STE20 kinases, such as STK24 and STK26. Interacts with CTTNBP2NL.

It localises to the cytoplasm. Functionally, calmodulin-binding scaffolding protein which is the center of the striatin-interacting phosphatase and kinase (STRIPAK) complexes. STRIPAK complexes have critical roles in protein (de)phosphorylation and are regulators of multiple signaling pathways including Hippo, MAPK, nuclear receptor and cytoskeleton remodeling. Different types of STRIPAK complexes are involved in a variety of biological processes such as cell growth, differentiation, apoptosis, metabolism and immune regulation. Key regulator of the expanded Hippo signaling pathway by interacting and allowing the inhibition of MAP4K kinases by the STRIPAK complex. This chain is Striatin-4, found in Homo sapiens (Human).